The following is a 216-amino-acid chain: Probable nicotinate-nucleotide adenylyltransferase (216 aa).

This sequence belongs to the NadD family.

It carries out the reaction nicotinate beta-D-ribonucleotide + ATP + H(+) = deamido-NAD(+) + diphosphate. It participates in cofactor biosynthesis; NAD(+) biosynthesis; deamido-NAD(+) from nicotinate D-ribonucleotide: step 1/1. Catalyzes the reversible adenylation of nicotinate mononucleotide (NaMN) to nicotinic acid adenine dinucleotide (NaAD). The chain is Probable nicotinate-nucleotide adenylyltransferase from Marinobacter nauticus (strain ATCC 700491 / DSM 11845 / VT8) (Marinobacter aquaeolei).